Consider the following 427-residue polypeptide: A-adding tRNA nucleotidyltransferase (427 aa).

49–52 (GTVR) serves as a coordination point for ATP. Mg(2+) contacts are provided by D62 and D64. ATP-binding positions include 136-137 (RD), N141, 181-190 (DPTRLLRGVR), R194, and R225.

It belongs to the tRNA nucleotidyltransferase/poly(A) polymerase family. Mg(2+) serves as cofactor.

It catalyses the reaction a tRNA with a 3' CC end + ATP = a tRNA with a 3' CCA end + diphosphate. TRNA nucleotidyltransferase involved in the synthesis of the tRNA CCA terminus. Adds the terminal adenosine residue to tRNA. The chain is A-adding tRNA nucleotidyltransferase from Halalkalibacterium halodurans (strain ATCC BAA-125 / DSM 18197 / FERM 7344 / JCM 9153 / C-125) (Bacillus halodurans).